The primary structure comprises 111 residues: Probable monothiol glutaredoxin 2 (111 aa).

The 103-residue stretch at 7 to 109 (LKFIQNAIKK…KMLKDETKLI (103 aa)) folds into the Glutaredoxin domain. Lys-24 provides a ligand contact to glutathione. Cys-32 is a [2Fe-2S] cluster binding site. Glutathione contacts are provided by residues Arg-61, Phe-73, and 86–87 (CD).

The protein belongs to the glutaredoxin family. Monothiol subfamily.

In Rickettsia typhi (strain ATCC VR-144 / Wilmington), this protein is Probable monothiol glutaredoxin 2 (grxC2).